We begin with the raw amino-acid sequence, 577 residues long: ATP-dependent zinc metalloprotease FtsH (577 aa).

Residues methionine 1–lysine 3 are Cytoplasmic-facing. A helical membrane pass occupies residues leucine 4–histidine 24. The Extracellular portion of the chain corresponds to leucine 25–serine 98. A helical membrane pass occupies residues alanine 99–isoleucine 119. Residues arginine 120–valine 577 lie on the Cytoplasmic side of the membrane. Glycine 186 to threonine 193 serves as a coordination point for ATP. Histidine 409 provides a ligand contact to Zn(2+). The active site involves glutamate 410. Zn(2+)-binding residues include histidine 413 and aspartate 487.

It in the central section; belongs to the AAA ATPase family. In the C-terminal section; belongs to the peptidase M41 family. In terms of assembly, homohexamer. Zn(2+) is required as a cofactor.

It is found in the cell membrane. Its function is as follows. Acts as a processive, ATP-dependent zinc metallopeptidase for both cytoplasmic and membrane proteins. Plays a role in the quality control of integral membrane proteins. This is ATP-dependent zinc metalloprotease FtsH from Lachnoclostridium phytofermentans (strain ATCC 700394 / DSM 18823 / ISDg) (Clostridium phytofermentans).